The primary structure comprises 180 residues: Large ribosomal subunit protein uL16 (180 aa).

The protein belongs to the universal ribosomal protein uL16 family.

The protein is Large ribosomal subunit protein uL16 of Thermococcus sibiricus (strain DSM 12597 / MM 739).